A 265-amino-acid chain; its full sequence is uncharacterized protein (265 aa).

2 disordered regions span residues 162–183 and 196–239; these read VTKK…NNDQ and AKTN…DKEI. Composition is skewed to polar residues over residues 165 to 183 and 213 to 233; these read KNAS…NNDQ and QSTS…GNAS.

Belongs to the MG185/MG260 family.

This is an uncharacterized protein from Mycoplasma pneumoniae (strain ATCC 29342 / M129 / Subtype 1) (Mycoplasmoides pneumoniae).